We begin with the raw amino-acid sequence, 624 residues long: Prickle planar cell polarity protein 3 (624 aa).

Residues M1 to G12 show a composition bias toward basic residues. Residues M1–P26 form a disordered region. The PET domain maps to S74–T182. LIM zinc-binding domains follow at residues A184–P249, R250–E309, and Y310–T373. The tract at residues E371–R617 is disordered. Residues S383 to S409 show a composition bias toward low complexity. Residues P447 to A458 show a composition bias toward pro residues. Phosphoserine is present on residues S475 and S491. Residues S509 to H541 are compositionally biased toward basic residues. A compositionally biased stretch (low complexity) spans L545–E564. Residues R587–A601 are compositionally biased toward polar residues.

This sequence belongs to the prickle / espinas / testin family. As to quaternary structure, interacts with VANGL2 via its C-terminus. The VANGL2-dependent membrane recruitment of PRICKLE3 is a prerequisite for its polarization. Interacts with WTIP. WTIP is involved in the recruitment of PRICKLE3 to the basal body. Interacts with MT-ATP8, a component of the mitochondrial complex V. In terms of tissue distribution, widely expressed.

It localises to the cytoplasm. The protein localises to the cell membrane. The protein resides in the mitochondrion. Functionally, involved in the planar cell polarity (PCP) pathway that is essential for the polarization of epithelial cells during morphogenetic processes, including gastrulation and neurulation. PCP is maintained by two molecular modules, the global and the core modules, PRICKLE3 being part of the core module. Distinct complexes of the core module segregate to opposite sides of the cell, where they interact with the opposite complex in the neighboring cell at or near the adherents junctions. Involved in the organization of the basal body. Involved in cilia growth and positioning. Required for proper assembly, stability, and function of mitochondrial membrane ATP synthase (mitochondrial complex V). The protein is Prickle planar cell polarity protein 3 of Mus musculus (Mouse).